A 159-amino-acid polypeptide reads, in one-letter code: Transcription elongation factor GreA (159 aa).

Belongs to the GreA/GreB family.

Functionally, necessary for efficient RNA polymerase transcription elongation past template-encoded arresting sites. The arresting sites in DNA have the property of trapping a certain fraction of elongating RNA polymerases that pass through, resulting in locked ternary complexes. Cleavage of the nascent transcript by cleavage factors such as GreA or GreB allows the resumption of elongation from the new 3'terminus. GreA releases sequences of 2 to 3 nucleotides. In Psychromonas ingrahamii (strain DSM 17664 / CCUG 51855 / 37), this protein is Transcription elongation factor GreA.